The primary structure comprises 292 residues: Formamidopyrimidine-DNA glycosylase (292 aa).

Catalysis depends on Pro2, which acts as the Schiff-base intermediate with DNA. Catalysis depends on Glu3, which acts as the Proton donor. Residue Lys61 is the Proton donor; for beta-elimination activity of the active site. Positions 96, 115, and 161 each coordinate DNA. An FPG-type zinc finger spans residues 247-281 (SAYGQEDRPCPRCGTAIRREKFMNRSSFSCPKCQP). The active-site Proton donor; for delta-elimination activity is Arg271.

This sequence belongs to the FPG family. Monomer. Requires Zn(2+) as cofactor.

It catalyses the reaction Hydrolysis of DNA containing ring-opened 7-methylguanine residues, releasing 2,6-diamino-4-hydroxy-5-(N-methyl)formamidopyrimidine.. The enzyme catalyses 2'-deoxyribonucleotide-(2'-deoxyribose 5'-phosphate)-2'-deoxyribonucleotide-DNA = a 3'-end 2'-deoxyribonucleotide-(2,3-dehydro-2,3-deoxyribose 5'-phosphate)-DNA + a 5'-end 5'-phospho-2'-deoxyribonucleoside-DNA + H(+). Involved in base excision repair of DNA damaged by oxidation or by mutagenic agents. Acts as a DNA glycosylase that recognizes and removes damaged bases. Has a preference for oxidized purines, such as 7,8-dihydro-8-oxoguanine (8-oxoG). Has AP (apurinic/apyrimidinic) lyase activity and introduces nicks in the DNA strand. Cleaves the DNA backbone by beta-delta elimination to generate a single-strand break at the site of the removed base with both 3'- and 5'-phosphates. The protein is Formamidopyrimidine-DNA glycosylase of Rhodococcus jostii (strain RHA1).